The sequence spans 360 residues: Peptide chain release factor 1 (360 aa).

The residue at position 233 (Gln233) is an N5-methylglutamine. The tract at residues 283 to 305 is disordered; that stretch reads KLDAERAADRRSQVGSGDRSERI.

The protein belongs to the prokaryotic/mitochondrial release factor family. Methylated by PrmC. Methylation increases the termination efficiency of RF1.

It localises to the cytoplasm. Functionally, peptide chain release factor 1 directs the termination of translation in response to the peptide chain termination codons UAG and UAA. The polypeptide is Peptide chain release factor 1 (Methylocella silvestris (strain DSM 15510 / CIP 108128 / LMG 27833 / NCIMB 13906 / BL2)).